Consider the following 90-residue polypeptide: Small ribosomal subunit protein bS16 (90 aa).

This sequence belongs to the bacterial ribosomal protein bS16 family.

The chain is Small ribosomal subunit protein bS16 from Listeria innocua serovar 6a (strain ATCC BAA-680 / CLIP 11262).